The primary structure comprises 157 residues: Ubiquitin-like protein 4A (157 aa).

One can recognise a Ubiquitin-like domain in the interval 1 to 76; the sequence is MQLTVKALQG…LNLVVKPLEK (76 aa). Lys-48 participates in a covalent cross-link: Glycyl lysine isopeptide (Lys-Gly) (interchain with G-Cter in ubiquitin). Residue Ser-90 is modified to Phosphoserine. The tract at residues 96–138 is required and sufficient for interaction with BAG6; that stretch reads WQLISKVLARHFSAADASRVLEQLQRDYERSLSRLTLDDIERL.

Component of the BAG6/BAT3 complex, at least composed of BAG6, UBL4A and GET4/TRC35. Interacts with BAG6; the interaction is direct and required for UBL4A protein stability. Interacts with USP13; may be indirect via BAG6. Polyubiquitinated. Ubiquitination by AMFR and deubiquitination by USP13 may regulate the interaction between the BAG6/BAT complex and SGTA and therefore may regulate client proteins fate.

The protein resides in the cytoplasm. It localises to the cytosol. Its subcellular location is the nucleus. Its function is as follows. As part of a cytosolic protein quality control complex, the BAG6/BAT3 complex, maintains misfolded and hydrophobic patches-containing proteins in a soluble state and participates in their proper delivery to the endoplasmic reticulum or alternatively can promote their sorting to the proteasome where they undergo degradation. The BAG6/BAT3 complex is involved in the post-translational delivery of tail-anchored/type II transmembrane proteins to the endoplasmic reticulum membrane. Recruited to ribosomes, it interacts with the transmembrane region of newly synthesized tail-anchored proteins and together with SGTA and ASNA1 mediates their delivery to the endoplasmic reticulum. Client proteins that cannot be properly delivered to the endoplasmic reticulum are ubiquitinated and sorted to the proteasome. Similarly, the BAG6/BAT3 complex also functions as a sorting platform for proteins of the secretory pathway that are mislocalized to the cytosol either delivering them to the proteasome for degradation or to the endoplasmic reticulum. The BAG6/BAT3 complex also plays a role in the endoplasmic reticulum-associated degradation (ERAD), a quality control mechanism that eliminates unwanted proteins of the endoplasmic reticulum through their retrotranslocation to the cytosol and their targeting to the proteasome. It maintains these retrotranslocated proteins in an unfolded yet soluble state condition in the cytosol to ensure their proper delivery to the proteasome. This Callithrix jacchus (White-tufted-ear marmoset) protein is Ubiquitin-like protein 4A (UBL4A).